The sequence spans 286 residues: ATP synthase gamma chain (286 aa).

It belongs to the ATPase gamma chain family. In terms of assembly, F-type ATPases have 2 components, CF(1) - the catalytic core - and CF(0) - the membrane proton channel. CF(1) has five subunits: alpha(3), beta(3), gamma(1), delta(1), epsilon(1). CF(0) has three main subunits: a, b and c.

Its subcellular location is the cell membrane. In terms of biological role, produces ATP from ADP in the presence of a proton gradient across the membrane. The gamma chain is believed to be important in regulating ATPase activity and the flow of protons through the CF(0) complex. This is ATP synthase gamma chain from Ureaplasma parvum serovar 3 (strain ATCC 27815 / 27 / NCTC 11736).